The chain runs to 350 residues: dTDP-D-glucose 4,6-dehydratase (350 aa).

T142 contributes to the substrate binding site. The active-site Proton donor is the D143. Catalysis depends on proton acceptor residues E144 and Y166.

The protein belongs to the NAD(P)-dependent epimerase/dehydratase family. dTDP-glucose dehydratase subfamily. The cofactor is NAD(+).

It carries out the reaction dTDP-alpha-D-glucose = dTDP-4-dehydro-6-deoxy-alpha-D-glucose + H2O. The protein is dTDP-D-glucose 4,6-dehydratase (TGDS) of Homo sapiens (Human).